Consider the following 257-residue polypeptide: Imidazole glycerol phosphate synthase subunit HisF (257 aa).

Catalysis depends on residues D11 and D130.

It belongs to the HisA/HisF family. In terms of assembly, heterodimer of HisH and HisF.

The protein localises to the cytoplasm. It carries out the reaction 5-[(5-phospho-1-deoxy-D-ribulos-1-ylimino)methylamino]-1-(5-phospho-beta-D-ribosyl)imidazole-4-carboxamide + L-glutamine = D-erythro-1-(imidazol-4-yl)glycerol 3-phosphate + 5-amino-1-(5-phospho-beta-D-ribosyl)imidazole-4-carboxamide + L-glutamate + H(+). Its pathway is amino-acid biosynthesis; L-histidine biosynthesis; L-histidine from 5-phospho-alpha-D-ribose 1-diphosphate: step 5/9. Its function is as follows. IGPS catalyzes the conversion of PRFAR and glutamine to IGP, AICAR and glutamate. The HisF subunit catalyzes the cyclization activity that produces IGP and AICAR from PRFAR using the ammonia provided by the HisH subunit. This is Imidazole glycerol phosphate synthase subunit HisF from Actinobacillus pleuropneumoniae serotype 7 (strain AP76).